Consider the following 388-residue polypeptide: Nitric oxide reductase FlRd-NAD(+) reductase (388 aa).

The protein belongs to the FAD-dependent oxidoreductase family. FAD is required as a cofactor.

It localises to the cytoplasm. It carries out the reaction 2 reduced [nitric oxide reductase rubredoxin domain] + NAD(+) + H(+) = 2 oxidized [nitric oxide reductase rubredoxin domain] + NADH. It functions in the pathway nitrogen metabolism; nitric oxide reduction. One of at least two accessory proteins for anaerobic nitric oxide (NO) reductase. Reduces the rubredoxin moiety of NO reductase. This is Nitric oxide reductase FlRd-NAD(+) reductase from Aeromonas salmonicida (strain A449).